A 75-amino-acid chain; its full sequence is Serine rich endogenous peptide 20 (75 aa).

The N-terminal stretch at 1–25 (MYKLTLCILTLSFLLLSGLSNTVLA) is a signal peptide. An SCOOP motif motif is present at residues 52–66 (KIGASGSNSGRAPSC). The interval 54–75 (GASGSNSGRAPSCNNSCKPNRP) is disordered. The SxS motif essential for MIK2 binding signature appears at 56 to 58 (SGS). Residues 56–75 (SGSNSGRAPSCNNSCKPNRP) show a composition bias toward polar residues.

This sequence belongs to the serine rich endogenous peptide (SCOOP) phytocytokine family. As to quaternary structure, interacts with MIK2 (via extracellular leucine-rich repeat domain); this interaction triggers the formation of complex between MIK2 and the BAK1/SERK3 and SERK4 coreceptors, and subsequent BAK1 activation by phosphorylation. Mostly expressed in roots.

Its subcellular location is the cell membrane. The protein localises to the secreted. It localises to the extracellular space. The protein resides in the apoplast. Its function is as follows. Brassicaceae-specific phytocytokine (plant endogenous peptide released into the apoplast) perceived by MIK2 in a BAK1/SERK3 and SERK4 coreceptors-dependent manner, that modulates various physiological and antimicrobial processes including growth prevention and reactive oxygen species (ROS) response regulation. Inhibits root growth. The protein is Serine rich endogenous peptide 20 of Arabidopsis thaliana (Mouse-ear cress).